A 760-amino-acid chain; its full sequence is DNA-directed RNA polymerase subunit beta' (760 aa).

Cysteine 76, cysteine 78, cysteine 90, and cysteine 93 together coordinate Zn(2+). Residues aspartate 594, aspartate 596, and aspartate 598 each contribute to the Mg(2+) site.

Belongs to the RNA polymerase beta' chain family. RpoC1 subfamily. In terms of assembly, in plastids the minimal PEP RNA polymerase catalytic core is composed of four subunits: alpha, beta, beta', and beta''. When a (nuclear-encoded) sigma factor is associated with the core the holoenzyme is formed, which can initiate transcription. It depends on Mg(2+) as a cofactor. The cofactor is Zn(2+).

It localises to the plastid. It is found in the chloroplast. The catalysed reaction is RNA(n) + a ribonucleoside 5'-triphosphate = RNA(n+1) + diphosphate. In terms of biological role, DNA-dependent RNA polymerase catalyzes the transcription of DNA into RNA using the four ribonucleoside triphosphates as substrates. In Bigelowiella natans (Pedinomonas minutissima), this protein is DNA-directed RNA polymerase subunit beta'.